The primary structure comprises 371 residues: Chorismate synthase (371 aa).

2 residues coordinate NADP(+): arginine 48 and arginine 54. FMN contacts are provided by residues 125 to 127 (RSS), 238 to 239 (NA), glycine 278, 293 to 297 (KPTSS), and arginine 319.

Belongs to the chorismate synthase family. In terms of assembly, homotetramer. Requires FMNH2 as cofactor.

It carries out the reaction 5-O-(1-carboxyvinyl)-3-phosphoshikimate = chorismate + phosphate. The protein operates within metabolic intermediate biosynthesis; chorismate biosynthesis; chorismate from D-erythrose 4-phosphate and phosphoenolpyruvate: step 7/7. In terms of biological role, catalyzes the anti-1,4-elimination of the C-3 phosphate and the C-6 proR hydrogen from 5-enolpyruvylshikimate-3-phosphate (EPSP) to yield chorismate, which is the branch point compound that serves as the starting substrate for the three terminal pathways of aromatic amino acid biosynthesis. This reaction introduces a second double bond into the aromatic ring system. This Polynucleobacter asymbioticus (strain DSM 18221 / CIP 109841 / QLW-P1DMWA-1) (Polynucleobacter necessarius subsp. asymbioticus) protein is Chorismate synthase.